Reading from the N-terminus, the 192-residue chain is 21.7 kDa class VI heat shock protein (192 aa).

One can recognise a sHSP domain in the interval 80–192 (SLRSLGQCRV…IPKINSKNKF (113 aa)).

This sequence belongs to the small heat shock protein (HSP20) family. May form oligomeric structures.

Its subcellular location is the cytoplasm. This chain is 21.7 kDa class VI heat shock protein (HSP21.7), found in Arabidopsis thaliana (Mouse-ear cress).